Reading from the N-terminus, the 224-residue chain is Dehydration-responsive element-binding protein 1G (224 aa).

Over residues 1 to 16 (MDVSAALSSDYSSGTP) the composition is skewed to polar residues. The interval 1 to 46 (MDVSAALSSDYSSGTPSPVAADADDGSSAYMTVSSAPPKRRAGRTK) is disordered. Residues 54–111 (VFKGVRRRNPGRWVCEVREPHGKQRIWLGTFETAEMAARAHDVAALALRGRAACLNFA) constitute a DNA-binding region (AP2/ERF). Disordered stretches follow at residues 139 to 161 (AFRPPPDESNAATEVAAAASGAT) and 200 to 224 (PPMAGDPAVGSGEDDNDGEVQLWSY).

This sequence belongs to the AP2/ERF transcription factor family. ERF subfamily.

The protein localises to the nucleus. In terms of biological role, transcriptional activator that binds specifically to the DNA sequence 5'-[AG]CCGAC-3'. Binding to the C-repeat/DRE element mediates high salinity- and dehydration-inducible transcription. This is Dehydration-responsive element-binding protein 1G (DREB1G) from Oryza sativa subsp. japonica (Rice).